The primary structure comprises 403 residues: Tyrosine--tRNA ligase (403 aa).

A 'HIGH' region motif is present at residues P45–H54. Residues K229 to S233 carry the 'KMSKS' region motif. K232 is a binding site for ATP. In terms of domain architecture, S4 RNA-binding spans V341–F402.

Belongs to the class-I aminoacyl-tRNA synthetase family. TyrS type 2 subfamily. Homodimer.

It is found in the cytoplasm. The catalysed reaction is tRNA(Tyr) + L-tyrosine + ATP = L-tyrosyl-tRNA(Tyr) + AMP + diphosphate + H(+). Its function is as follows. Catalyzes the attachment of tyrosine to tRNA(Tyr) in a two-step reaction: tyrosine is first activated by ATP to form Tyr-AMP and then transferred to the acceptor end of tRNA(Tyr). The protein is Tyrosine--tRNA ligase of Geobacter metallireducens (strain ATCC 53774 / DSM 7210 / GS-15).